The chain runs to 307 residues: UDP-N-acetylenolpyruvoylglucosamine reductase (307 aa).

Residues 34 to 198 form the FAD-binding PCMH-type domain; that stretch reads LGGKADVYIT…LEATFALKKA (165 aa). The active site involves R177. S227 functions as the Proton donor in the catalytic mechanism. E297 is an active-site residue.

This sequence belongs to the MurB family. The cofactor is FAD.

The protein localises to the cytoplasm. It carries out the reaction UDP-N-acetyl-alpha-D-muramate + NADP(+) = UDP-N-acetyl-3-O-(1-carboxyvinyl)-alpha-D-glucosamine + NADPH + H(+). It participates in cell wall biogenesis; peptidoglycan biosynthesis. Functionally, cell wall formation. The chain is UDP-N-acetylenolpyruvoylglucosamine reductase from Oceanobacillus iheyensis (strain DSM 14371 / CIP 107618 / JCM 11309 / KCTC 3954 / HTE831).